Reading from the N-terminus, the 915-residue chain is MFAPLLRVLFGSKNDREVKRMRRAVRAINALEEQMVALTDEQLRAKTEEFRGRLGKGETLDQLLPEAFAVAREAGKRVMGMRHFDVQLIGGMVLHEGKIAEMRTGEGKTLVATLAVYLNALAGKGVHVVTVNDYLARRDANWMRPLYEFLGLSVGVVTPFQPPEEKRAAYAADITYGTNNEFGFDYLRDNMAFSLEDKFQRELNYAVIDEVDSILIDEARTPLIISGQAEDSSQLYLQINALIPRLKRHIEEEEGVVTQEGHYVVDEKTRQIELNEQGHQFIEELLASAGLLPEGDNLYSAHNLQLLTHVYAGLRAHVLFHRNVEYIVQGNQVLLIDEHTGRTMQGRRLSEGLHQAIEAKEGLPIQAESQTLASTTFQNYFRLYHKLAGMTGTADTEAFEFRQIYGLDVVVIPTHRPIARKDFNDLVYLTQEEKYAAIIGDIKECQTQGRPVLVGTASIESSEYVSQLLKKEGIAHQVLNAKYHEKEAEIIAQAGRPGAVTIATNMAGRGTDILLGGNWEVEVAALENPTDEPVAQIKADWQKRHQQVIEAGGLHVIASERHESRRIDNQLRGRAGRQGDPGSSRFYLSLEDNLMRIFASDRVKNFMKALGMQAGEAIEHRMVTNAIEKAQRKVEGRNFDMRKQLLEFDDVANEQRKVIYHMRNSLLESEDIGETIAEFRREVLGAAIGQHIPPQSLPEQWDVAGLEAVLQSDFGVQLPLQQWLDEDDRLHEEALRERILEALLVAYREKEEIAGTEALRTFEKQILLRVLDDLWKDHLLTMDHLRHGIHLRGYAQKNPKQEYKRESFELFQSLLESIKRDAIRVLSHVQVRREDPAEEEERLRREAEALARRMQFQHAAASALAPQAEEDDLEVVEEVPLPGTAPVRPEPKIGRNEPCPCGSGKKYKHCHGQLN.

ATP-binding positions include Q87, 105–109 (GEGKT), and D512. The tract at residues 881-915 (LPGTAPVRPEPKIGRNEPCPCGSGKKYKHCHGQLN) is disordered. Positions 899, 901, 910, and 911 each coordinate Zn(2+). The segment covering 905–915 (KKYKHCHGQLN) has biased composition (basic residues).

This sequence belongs to the SecA family. As to quaternary structure, monomer and homodimer. Part of the essential Sec protein translocation apparatus which comprises SecA, SecYEG and auxiliary proteins SecDF-YajC and YidC. Zn(2+) is required as a cofactor.

Its subcellular location is the cell inner membrane. It localises to the cytoplasm. It catalyses the reaction ATP + H2O + cellular proteinSide 1 = ADP + phosphate + cellular proteinSide 2.. In terms of biological role, part of the Sec protein translocase complex. Interacts with the SecYEG preprotein conducting channel. Has a central role in coupling the hydrolysis of ATP to the transfer of proteins into and across the cell membrane, serving both as a receptor for the preprotein-SecB complex and as an ATP-driven molecular motor driving the stepwise translocation of polypeptide chains across the membrane. This is Protein translocase subunit SecA from Azotobacter vinelandii (strain DJ / ATCC BAA-1303).